The chain runs to 339 residues: Phosphate acyltransferase (339 aa).

Belongs to the PlsX family. In terms of assembly, homodimer. Probably interacts with PlsY.

The protein localises to the cytoplasm. The catalysed reaction is a fatty acyl-[ACP] + phosphate = an acyl phosphate + holo-[ACP]. The protein operates within lipid metabolism; phospholipid metabolism. Functionally, catalyzes the reversible formation of acyl-phosphate (acyl-PO(4)) from acyl-[acyl-carrier-protein] (acyl-ACP). This enzyme utilizes acyl-ACP as fatty acyl donor, but not acyl-CoA. The sequence is that of Phosphate acyltransferase from Helicobacter pylori (strain Shi470).